The following is a 1115-amino-acid chain: Eukaryotic translation initiation factor 2-alpha kinase 3 (1115 aa).

The N-terminal stretch at 1–29 (MERATGPGSLARTLLLPLLLGLVAGTVTA) is a signal peptide. Topologically, residues 30-514 (RRTSDLLAPT…PNYKNIRKKD (485 aa)) are extracellular. The interval 74 to 101 (SEALPAAAGEQEAREPEPEPEEEPDIRP) is disordered. Asparagine 259 carries N-linked (GlcNAc...) asparagine glycosylation. A helical transmembrane segment spans residues 515–535 (PVLLLHWWKEIVGTIVFCIVA). Residues 536-1115 (TTFIVRRLFH…SSPHSPLPSN (580 aa)) are Cytoplasmic-facing. The 484-residue stretch at 593–1076 (FEPIQCMGRG…AASIIENAIF (484 aa)) folds into the Protein kinase domain. 599-607 (MGRGGFGVV) is a binding site for ATP. At tyrosine 619 the chain carries Phosphotyrosine; by autocatalysis. ATP is bound at residue lysine 622. The tract at residues 647–887 (EHPGIVRYFN…SPKVYLYIQM (241 aa)) is insert loop. At serine 715 the chain carries Phosphoserine. A Phosphothreonine modification is found at threonine 802. 2 disordered regions span residues 807–832 (VFED…VGNH) and 841–860 (RHSG…SRPT). The segment covering 845–860 (SKSSEPTVSVSPSRPT) has biased composition (polar residues). Catalysis depends on aspartate 936, which acts as the Proton acceptor. The residue at position 981 (threonine 981) is a Phosphothreonine. Residues 1087-1115 (LRQRSRSMSSPGAKHSRHSSSPHSPLPSN) form a disordered region. Residue serine 1093 is modified to Phosphoserine.

The protein belongs to the protein kinase superfamily. Ser/Thr protein kinase family. GCN2 subfamily. Forms dimers with HSPA5/BIP in resting cells. Homotetramerizes in response to endoplasmic reticulum (ER) stress, leading to its activation. Interacts with HSP90B1/GRP94. Interacts with DNAJC3; inhibiting EIF2AK3/PERK activity. Interacts with ATAD3A; ATAD3A and EIF2S1/eIF-2-alpha occupy a common binding site within the cytoplasmic loop of EIF2AK3/PERK, leading to prevent EIF2AK3/PERK association with its substrate EIF2S1/eIF-2-alpha. Interacts with MFN2. Interacts with TMEM33. Interacts with PDIA6. Interacts with LACC1. In terms of processing, oligomerization of the N-terminal ER luminal domain by ER stress promotes EIF2AK3/PERK trans-autophosphorylation of the C-terminal cytoplasmic kinase domain at multiple residues including Thr-981 on the kinase activation loop. Autophosphorylated at Tyr-619 following endoplasmic reticulum stress, leading to activate its activity. Dephosphorylated at Tyr-619 by PTPN1/PTP1B, leading to inactivate its enzyme activity. Phosphorylation at Thr-802 by AKT (AKT1, AKT2 and/or AKT3) inactivates EIF2AK3/PERK. ADP-ribosylated by PARP16 upon ER stress, which increases kinase activity.

It localises to the endoplasmic reticulum membrane. It carries out the reaction L-seryl-[protein] + ATP = O-phospho-L-seryl-[protein] + ADP + H(+). The catalysed reaction is L-threonyl-[protein] + ATP = O-phospho-L-threonyl-[protein] + ADP + H(+). It catalyses the reaction L-tyrosyl-[protein] + ATP = O-phospho-L-tyrosyl-[protein] + ADP + H(+). Inhibited by HSPA5/BIP in absence of stress. Perturbation in protein folding in the endoplasmic reticulum (ER) promotes reversible dissociation from HSPA5/BIP and oligomerization, resulting in trans-autophosphorylation and kinase activity induction. Inactivated following phosphorylation at Thr-802 by AKT (AKT1, AKT2 and/or AKT3). Inhibited by ATAD3A at mitochondria-endoplasmic reticulum contact sites, providing a safe haven for mitochondrial protein translation during ER stress. Metabolic-stress sensing protein kinase that phosphorylates the alpha subunit of eukaryotic translation initiation factor 2 (EIF2S1/eIF-2-alpha) in response to various stress, such as unfolded protein response (UPR). Key effector of the integrated stress response (ISR) to unfolded proteins: EIF2AK3/PERK specifically recognizes and binds misfolded proteins, leading to its activation and EIF2S1/eIF-2-alpha phosphorylation. EIF2S1/eIF-2-alpha phosphorylation in response to stress converts EIF2S1/eIF-2-alpha in a global protein synthesis inhibitor, leading to a global attenuation of cap-dependent translation, while concomitantly initiating the preferential translation of ISR-specific mRNAs, such as the transcriptional activators ATF4 and QRICH1, and hence allowing ATF4- and QRICH1-mediated reprogramming. The EIF2AK3/PERK-mediated unfolded protein response increases mitochondrial oxidative phosphorylation by promoting ATF4-mediated expression of COX7A2L/SCAF1, thereby increasing formation of respiratory chain supercomplexes. In contrast to most subcellular compartments, mitochondria are protected from the EIF2AK3/PERK-mediated unfolded protein response due to EIF2AK3/PERK inhibition by ATAD3A at mitochondria-endoplasmic reticulum contact sites. In addition to EIF2S1/eIF-2-alpha, also phosphorylates NFE2L2/NRF2 in response to stress, promoting release of NFE2L2/NRF2 from the BCR(KEAP1) complex, leading to nuclear accumulation and activation of NFE2L2/NRF2. Serves as a critical effector of unfolded protein response (UPR)-induced G1 growth arrest due to the loss of cyclin-D1 (CCND1). Involved in control of mitochondrial morphology and function. This is Eukaryotic translation initiation factor 2-alpha kinase 3 from Bos taurus (Bovine).